The following is a 501-amino-acid chain: Chromosomal replication initiator protein DnaA (501 aa).

The domain I, interacts with DnaA modulators stretch occupies residues 1–90 (MSVELWQQCV…KRSSAPRAAP (90 aa)). A domain II region spans residues 91-164 (NAPLAAAASQ…QVEGALKHTS (74 aa)). Residues 103 to 121 (AAPVASTPAPAPSKSSAKK) show a composition bias toward low complexity. The tract at residues 103-150 (AAPVASTPAPAPSKSSAKKNAAENEEPSRDSFDPMAGASSQQAPIRAE) is disordered. Residues 122-134 (NAAENEEPSRDSF) are compositionally biased toward basic and acidic residues. Positions 165 to 381 (YLNRTFTFEN…GALKRVIAHS (217 aa)) are domain III, AAA+ region. The ATP site is built by G209, G211, K212, and T213. The domain IV, binds dsDNA stretch occupies residues 382–501 (HFMGRDITIE…YKNLLRTLTT (120 aa)).

Belongs to the DnaA family. Oligomerizes as a right-handed, spiral filament on DNA at oriC.

The protein resides in the cytoplasm. In terms of biological role, plays an essential role in the initiation and regulation of chromosomal replication. ATP-DnaA binds to the origin of replication (oriC) to initiate formation of the DNA replication initiation complex once per cell cycle. Binds the DnaA box (a 9 base pair repeat at the origin) and separates the double-stranded (ds)DNA. Forms a right-handed helical filament on oriC DNA; dsDNA binds to the exterior of the filament while single-stranded (ss)DNA is stabiized in the filament's interior. The ATP-DnaA-oriC complex binds and stabilizes one strand of the AT-rich DNA unwinding element (DUE), permitting loading of DNA polymerase. After initiation quickly degrades to an ADP-DnaA complex that is not apt for DNA replication. Binds acidic phospholipids. In Pseudomonas fluorescens (strain SBW25), this protein is Chromosomal replication initiator protein DnaA.